The sequence spans 260 residues: MLLAIDAGNTNIVFALVDGGAIVARWRIATDARRTADEYAVWLHQLLQLEGHDRSVIEAVIIATVVPRALHNLEVLASKYFGVEALVAGRPPVEWGITLDVDEPQNVGADRAVNVIAAHKRHPGDLILIDFGTATTFDVVDYSGAYKGGIIAPGINLSLDALVAAAAKLPRIAIEAPETSTVIGRTTQDQMLIGIYFGYVAMIEGLVARMKAEIGRPATVIATGGLATLFERHVKLFDSIEPDLTIQGLGIMYDRLKTGP.

Aspartate 6–valine 13 provides a ligand contact to ATP. Glycine 108–arginine 111 is a substrate binding site. The Proton acceptor role is filled by aspartate 110. Aspartate 130 is a binding site for K(+). An ATP-binding site is contributed by threonine 133. Threonine 187 serves as a coordination point for substrate.

It belongs to the type III pantothenate kinase family. In terms of assembly, homodimer. The cofactor is NH4(+). K(+) is required as a cofactor.

The protein resides in the cytoplasm. The catalysed reaction is (R)-pantothenate + ATP = (R)-4'-phosphopantothenate + ADP + H(+). Its pathway is cofactor biosynthesis; coenzyme A biosynthesis; CoA from (R)-pantothenate: step 1/5. In terms of biological role, catalyzes the phosphorylation of pantothenate (Pan), the first step in CoA biosynthesis. In Rhizorhabdus wittichii (strain DSM 6014 / CCUG 31198 / JCM 15750 / NBRC 105917 / EY 4224 / RW1) (Sphingomonas wittichii), this protein is Type III pantothenate kinase.